A 476-amino-acid chain; its full sequence is Glutamyl-tRNA(Gln) amidotransferase subunit A (476 aa).

Active-site charge relay system residues include K70 and S145. S169 (acyl-ester intermediate) is an active-site residue.

This sequence belongs to the amidase family. GatA subfamily. Heterotrimer of A, B and C subunits.

The catalysed reaction is L-glutamyl-tRNA(Gln) + L-glutamine + ATP + H2O = L-glutaminyl-tRNA(Gln) + L-glutamate + ADP + phosphate + H(+). Allows the formation of correctly charged Gln-tRNA(Gln) through the transamidation of misacylated Glu-tRNA(Gln) in organisms which lack glutaminyl-tRNA synthetase. The reaction takes place in the presence of glutamine and ATP through an activated gamma-phospho-Glu-tRNA(Gln). The sequence is that of Glutamyl-tRNA(Gln) amidotransferase subunit A from Methanosarcina acetivorans (strain ATCC 35395 / DSM 2834 / JCM 12185 / C2A).